The chain runs to 493 residues: Glutamate--tRNA ligase (493 aa).

The short motif at 10–20 is the 'HIGH' region element; it reads PSPTGFVHIGS. Cysteine 114, cysteine 116, cysteine 141, and glutamate 143 together coordinate Zn(2+). The 'KMSKS' region signature appears at 258–262; that stretch reads KLSKR. Residue lysine 261 participates in ATP binding.

It belongs to the class-I aminoacyl-tRNA synthetase family. Glutamate--tRNA ligase type 1 subfamily. Monomer. Zn(2+) is required as a cofactor.

The protein resides in the cytoplasm. The enzyme catalyses tRNA(Glu) + L-glutamate + ATP = L-glutamyl-tRNA(Glu) + AMP + diphosphate. Catalyzes the attachment of glutamate to tRNA(Glu) in a two-step reaction: glutamate is first activated by ATP to form Glu-AMP and then transferred to the acceptor end of tRNA(Glu). The protein is Glutamate--tRNA ligase of Alkaliphilus metalliredigens (strain QYMF).